Consider the following 200-residue polypeptide: Max dimerization protein 3 (200 aa).

Disordered stretches follow at residues 26 to 56 (EHGYASILPCDPATPGRRKRQRTNSNPDNVR) and 134 to 164 (LLPPNTERIRTDSLDSSTLSSERSDSDQEDL). The bHLH domain occupies 54-106 (NVRSVHNELEKHRRAQLRRCLEQLKQQVPLSMENSRHTTLSLLHRAKQHIKKL).

Efficient DNA binding requires dimerization with another bHLH protein. Binds DNA as a heterodimer with MAX.

It is found in the nucleus. Transcriptional repressor. Binds with MAX to form a sequence-specific DNA-binding protein complex which recognizes the core sequence 5'-CAC[GA]TG-3'. This is Max dimerization protein 3 (mxd3) from Xenopus tropicalis (Western clawed frog).